A 135-amino-acid chain; its full sequence is Large ribosomal subunit protein uL16c (135 aa).

It belongs to the universal ribosomal protein uL16 family. In terms of assembly, part of the 50S ribosomal subunit.

The protein localises to the plastid. It is found in the chloroplast. This is Large ribosomal subunit protein uL16c from Eucalyptus globulus subsp. globulus (Tasmanian blue gum).